The chain runs to 160 residues: 6,7-dimethyl-8-ribityllumazine synthase (160 aa).

Residues F32, 66–68 (ALE), and 90–92 (CII) each bind 5-amino-6-(D-ribitylamino)uracil. A (2S)-2-hydroxy-3-oxobutyl phosphate-binding site is contributed by 95-96 (ET). H98 acts as the Proton donor in catalysis. N123 provides a ligand contact to 5-amino-6-(D-ribitylamino)uracil. R137 serves as a coordination point for (2S)-2-hydroxy-3-oxobutyl phosphate.

The protein belongs to the DMRL synthase family.

It carries out the reaction (2S)-2-hydroxy-3-oxobutyl phosphate + 5-amino-6-(D-ribitylamino)uracil = 6,7-dimethyl-8-(1-D-ribityl)lumazine + phosphate + 2 H2O + H(+). It functions in the pathway cofactor biosynthesis; riboflavin biosynthesis; riboflavin from 2-hydroxy-3-oxobutyl phosphate and 5-amino-6-(D-ribitylamino)uracil: step 1/2. Its function is as follows. Catalyzes the formation of 6,7-dimethyl-8-ribityllumazine by condensation of 5-amino-6-(D-ribitylamino)uracil with 3,4-dihydroxy-2-butanone 4-phosphate. This is the penultimate step in the biosynthesis of riboflavin. The chain is 6,7-dimethyl-8-ribityllumazine synthase from Methylibium petroleiphilum (strain ATCC BAA-1232 / LMG 22953 / PM1).